The following is a 262-amino-acid chain: Shikimate dehydrogenase (NADP(+)) (262 aa).

Shikimate is bound by residues 15 to 17 (SRS) and T62. K66 functions as the Proton acceptor in the catalytic mechanism. E78 lines the NADP(+) pocket. Positions 87 and 102 each coordinate shikimate. Residues 126-130 (GAGGA), 150-155 (NRTLAR), and M214 each bind NADP(+). Residue Y216 coordinates shikimate. Residue G236 coordinates NADP(+).

It belongs to the shikimate dehydrogenase family. Homodimer.

It catalyses the reaction shikimate + NADP(+) = 3-dehydroshikimate + NADPH + H(+). It functions in the pathway metabolic intermediate biosynthesis; chorismate biosynthesis; chorismate from D-erythrose 4-phosphate and phosphoenolpyruvate: step 4/7. Functionally, involved in the biosynthesis of the chorismate, which leads to the biosynthesis of aromatic amino acids. Catalyzes the reversible NADPH linked reduction of 3-dehydroshikimate (DHSA) to yield shikimate (SA). This is Shikimate dehydrogenase (NADP(+)) from Acinetobacter baumannii (strain ACICU).